The sequence spans 59 residues: Large ribosomal subunit protein uL30 (59 aa).

This sequence belongs to the universal ribosomal protein uL30 family. In terms of assembly, part of the 50S ribosomal subunit.

The protein is Large ribosomal subunit protein uL30 of Psychrobacter sp. (strain PRwf-1).